A 675-amino-acid chain; its full sequence is UvrABC system protein B (675 aa).

A Helicase ATP-binding domain is found at 35–422 (EGVSDGLMFQ…ADNVVEQVVR (388 aa)). 48–55 (GVTGSGKT) serves as a coordination point for ATP. The Beta-hairpin motif lies at 101–124 (YYDYYQPEAYVPTRDLFIEKDSSI). Positions 439 to 605 (QVDDLLGEIH…GVSKAVRELI (167 aa)) constitute a Helicase C-terminal domain. A UVR domain is found at 633 to 668 (AREIRRLEKLMMDHARNLEFEQAAAARDALNALKSR).

Belongs to the UvrB family. In terms of assembly, forms a heterotetramer with UvrA during the search for lesions. Interacts with UvrC in an incision complex.

Its subcellular location is the cytoplasm. Functionally, the UvrABC repair system catalyzes the recognition and processing of DNA lesions. A damage recognition complex composed of 2 UvrA and 2 UvrB subunits scans DNA for abnormalities. Upon binding of the UvrA(2)B(2) complex to a putative damaged site, the DNA wraps around one UvrB monomer. DNA wrap is dependent on ATP binding by UvrB and probably causes local melting of the DNA helix, facilitating insertion of UvrB beta-hairpin between the DNA strands. Then UvrB probes one DNA strand for the presence of a lesion. If a lesion is found the UvrA subunits dissociate and the UvrB-DNA preincision complex is formed. This complex is subsequently bound by UvrC and the second UvrB is released. If no lesion is found, the DNA wraps around the other UvrB subunit that will check the other stand for damage. This Bordetella bronchiseptica (strain ATCC BAA-588 / NCTC 13252 / RB50) (Alcaligenes bronchisepticus) protein is UvrABC system protein B.